Here is a 241-residue protein sequence, read N- to C-terminus: Oil body-associated protein 1B (241 aa).

A compositionally biased stretch (polar residues) spans 1 to 12 (MEKAVHSSTTSG). A disordered region spans residues 1–22 (MEKAVHSSTTSGPAVPGETTKT).

The protein belongs to the OBAP family.

This is Oil body-associated protein 1B from Arabidopsis thaliana (Mouse-ear cress).